The chain runs to 228 residues: Chromatin remodeling protein SHL (228 aa).

In terms of domain architecture, BAH spans 21-137; sequence KSIQEGDAVL…STTGAFDPDR (117 aa). The PHD-type zinc finger occupies 139-190; the sequence is TVFCKCEMPYNPDDLMVQCEECSEWFHPSCIGTTIEEAKKPDNFYCEECSPQ. The span at 191–203 shows a compositional bias: polar residues; sequence QQNLHNSNSTSNN. Residues 191–228 form a disordered region; the sequence is QQNLHNSNSTSNNRDAKVNGKRSLEVTKSKNKHTKRPG. The span at 204-218 shows a compositional bias: basic and acidic residues; the sequence is RDAKVNGKRSLEVTK. Positions 210–217 match the Nuclear localization signal motif; that stretch reads GKRSLEVT. A compositionally biased stretch (basic residues) spans 219 to 228; it reads SKNKHTKRPG.

The protein belongs to the SHL1/EBS protein family. Recognizes di- and trimethylated histone H3 at lysine 4. Interacts with HDA6. Interacts with DEK3. In terms of tissue distribution, expressed ubiquitously. Mostly expressed in roots, stems, leaves and flowers, and, to a lower extent, in siliques.

The protein resides in the nucleus. Its function is as follows. Chromatin remodeling factor that binds to methylated histone (e.g. H3K4me2/3) to prevent their acetylation (e.g. H3K9K14Ac), likely by recruiting histone deacetylase (HDAC) complexes, and thus regulate the transcription of target genes. Required during development and for fertility, probably by modulating developmental gene expression. Promotes development speed, but at fitness cost. Involved in the chromatin-mediated repression of floral initiation and controls genes regulating flowering. Negatively regulates the expression of the floral integrator SOC1, by preventing high levels of H3 acetylation, thus maintaining an inactive chromatin conformation. The polypeptide is Chromatin remodeling protein SHL (Arabidopsis thaliana (Mouse-ear cress)).